A 60-amino-acid polypeptide reads, in one-letter code: UPF0434 protein Bpro_2950 (60 aa).

This sequence belongs to the UPF0434 family.

The sequence is that of UPF0434 protein Bpro_2950 from Polaromonas sp. (strain JS666 / ATCC BAA-500).